A 490-amino-acid chain; its full sequence is ATP synthase subunit beta, chloroplastic (490 aa).

170–177 is a binding site for ATP; the sequence is GGAGVGKT.

This sequence belongs to the ATPase alpha/beta chains family. In terms of assembly, F-type ATPases have 2 components, CF(1) - the catalytic core - and CF(0) - the membrane proton channel. CF(1) has five subunits: alpha(3), beta(3), gamma(1), delta(1), epsilon(1). CF(0) has four main subunits: a(1), b(1), b'(1) and c(9-12).

The protein localises to the plastid. It localises to the chloroplast thylakoid membrane. The enzyme catalyses ATP + H2O + 4 H(+)(in) = ADP + phosphate + 5 H(+)(out). Produces ATP from ADP in the presence of a proton gradient across the membrane. The catalytic sites are hosted primarily by the beta subunits. This chain is ATP synthase subunit beta, chloroplastic, found in Ipomoea setosa (Brazilian morning glory).